The following is a 113-amino-acid chain: Cell cycle protein GpsB (113 aa).

Residues 32 to 70 (LDSVIKDYENFGKEIERMKNENDRLTDKVDELNKQVSAG) are a coiled coil.

The protein belongs to the GpsB family. As to quaternary structure, forms polymers through the coiled coil domains. Interacts with PBP1, MreC and EzrA.

The protein localises to the cytoplasm. Functionally, divisome component that associates with the complex late in its assembly, after the Z-ring is formed, and is dependent on DivIC and PBP2B for its recruitment to the divisome. Together with EzrA, is a key component of the system that regulates PBP1 localization during cell cycle progression. Its main role could be the removal of PBP1 from the cell pole after pole maturation is completed. Also contributes to the recruitment of PBP1 to the division complex. Not essential for septum formation. This is Cell cycle protein GpsB from Pediococcus pentosaceus (strain ATCC 25745 / CCUG 21536 / LMG 10740 / 183-1w).